The chain runs to 214 residues: tRNA (guanine-N(7)-)-methyltransferase (214 aa).

Residues E44, D69, D96, and D118 each coordinate S-adenosyl-L-methionine. Residue D118 is part of the active site. A substrate-binding site is contributed by K122. The interaction with RNA stretch occupies residues 124-129 (KHEKRR). Residues D154 and 191-194 (TEYE) contribute to the substrate site.

Belongs to the class I-like SAM-binding methyltransferase superfamily. TrmB family.

The catalysed reaction is guanosine(46) in tRNA + S-adenosyl-L-methionine = N(7)-methylguanosine(46) in tRNA + S-adenosyl-L-homocysteine. It participates in tRNA modification; N(7)-methylguanine-tRNA biosynthesis. In terms of biological role, catalyzes the formation of N(7)-methylguanine at position 46 (m7G46) in tRNA. The protein is tRNA (guanine-N(7)-)-methyltransferase of Enterococcus faecalis (strain ATCC 700802 / V583).